The sequence spans 433 residues: Ribosomal protein uS12 methylthiotransferase RimO (433 aa).

Residues 9 to 124 (NKINVITLGC…LLKALGADYR (116 aa)) form the MTTase N-terminal domain. Cysteine 18, cysteine 53, cysteine 87, cysteine 148, cysteine 152, and cysteine 155 together coordinate [4Fe-4S] cluster. The region spanning 134–364 (TTPKNYAYLK…MDLQSQISWD (231 aa)) is the Radical SAM core domain. A TRAM domain is found at 367–433 (QEKLGQTFRC…TEFDLYGEPA (67 aa)).

It belongs to the methylthiotransferase family. RimO subfamily. It depends on [4Fe-4S] cluster as a cofactor.

It is found in the cytoplasm. It catalyses the reaction L-aspartate(89)-[ribosomal protein uS12]-hydrogen + (sulfur carrier)-SH + AH2 + 2 S-adenosyl-L-methionine = 3-methylsulfanyl-L-aspartate(89)-[ribosomal protein uS12]-hydrogen + (sulfur carrier)-H + 5'-deoxyadenosine + L-methionine + A + S-adenosyl-L-homocysteine + 2 H(+). Catalyzes the methylthiolation of an aspartic acid residue of ribosomal protein uS12. This is Ribosomal protein uS12 methylthiotransferase RimO from Flavobacterium psychrophilum (strain ATCC 49511 / DSM 21280 / CIP 103535 / JIP02/86).